Here is a 475-residue protein sequence, read N- to C-terminus: DNA-binding protein D-ETS-6 (475 aa).

The disordered stretch occupies residues 42–150 (SIGSGNETKL…VSPVEVPVDP (109 aa)). A compositionally biased stretch (low complexity) spans 70 to 108 (SSSSTSDSSASSYSSTDSDSGSSTSSSSIRSQLPALNLP). Residues 109–121 (VPLPLATPTPPAV) are compositionally biased toward pro residues. Positions 122–144 (SSPHQAPSPRRNSSDSNRSVSPV) are enriched in low complexity. A PNT domain is found at 132 to 219 (RNSSDSNRSV…QHFAISLYHA (88 aa)). A DNA-binding region (ETS) is located at residues 255 to 335 (IQLWQFLLEL…HGKRYAYKFD (81 aa)). The tract at residues 350-475 (GDPASSMLGS…PVTPTTNAFN (126 aa)) is disordered. Over residues 375 to 388 (PPLHHHPQHSHPHH) the composition is skewed to basic residues. Residues 401 to 436 (SSPASNSSSLGFPSSSTASSQASPGQAPASSSASTS) are compositionally biased toward low complexity. Residues 453–475 (RTSTSSAGNYDQGPVTPTTNAFN) are compositionally biased toward polar residues.

The protein belongs to the ETS family. In terms of tissue distribution, embryonic ventral nervous system and 1 pair of neurons in each thoracic segment.

It is found in the nucleus. In Drosophila melanogaster (Fruit fly), this protein is DNA-binding protein D-ETS-6 (Ets21C).